The chain runs to 325 residues: GMP reductase (325 aa).

The Thioimidate intermediate role is filled by C173. 202-225 (IIADGGIRSHGDIAKSIRFGATMV) is a binding site for NADP(+).

This sequence belongs to the IMPDH/GMPR family. GuaC type 2 subfamily.

It catalyses the reaction IMP + NH4(+) + NADP(+) = GMP + NADPH + 2 H(+). Functionally, catalyzes the irreversible NADPH-dependent deamination of GMP to IMP. It functions in the conversion of nucleobase, nucleoside and nucleotide derivatives of G to A nucleotides, and in maintaining the intracellular balance of A and G nucleotides. This Paracidovorax citrulli (strain AAC00-1) (Acidovorax citrulli) protein is GMP reductase.